We begin with the raw amino-acid sequence, 371 residues long: Homeobox protein Nkx-2.1 (371 aa).

The segment at residues 161–220 (RRKRRVLFSQAQVYELERRFKQQKYLSAPEREHLASMIHLTPTQVKIWFQNHRYKMKRQA) is a DNA-binding region (homeobox). 2 disordered regions span residues 219–294 (QAKD…QHQA) and 310–339 (GAGL…SPAA). Positions 233–243 (SGGGGGGGGTG) are enriched in gly residues. Positions 244–253 (CPQQQQAQQQ) are enriched in low complexity. Serine 254 bears the Phosphoserine mark. The span at 272–294 (AGAPAPGAASLQGHAQQQAQHQA) shows a compositional bias: low complexity.

It belongs to the NK-2 homeobox family. Interacts with WWTR1. In terms of processing, phosphorylated on serine residues by STK3/MST2. In terms of tissue distribution, thyroid and lung.

The protein resides in the nucleus. Its function is as follows. Transcription factor that binds and activates the promoter of thyroid specific genes such as thyroglobulin, thyroperoxidase, and thyrotropin receptor. Crucial in the maintenance of the thyroid differentiation phenotype. May play a role in lung development and surfactant homeostasis. Forms a regulatory loop with GRHL2 that coordinates lung epithelial cell morphogenesis and differentiation. Activates the transcription of GNRHR and plays a role in enhancing the circadian oscillation of its gene expression. Represses the transcription of the circadian transcriptional repressor NR1D1. This chain is Homeobox protein Nkx-2.1, found in Homo sapiens (Human).